A 164-amino-acid chain; its full sequence is MENYQGQHGYGADRVDVYGNPVAGQYGGGATAPGGGHGVMGMGGHHAGAGGQFQPVKEEHKTGGILHRSGSSSSSSSSEDDGMGGRRKKGIKEKIKEKLPGGNKGNNQQQQQMMGNTGGAYGQQGHAGMTGAGTGTGVHGAEYGNTGEKKGFMDKIKEKLPGQH.

Residues 42 to 51 are compositionally biased toward gly residues; it reads MGGHHAGAGG. Positions 42–164 are disordered; the sequence is MGGHHAGAGG…KIKEKLPGQH (123 aa). Low complexity predominate over residues 105–115; that stretch reads GNNQQQQQMMG. The span at 128 to 138 shows a compositional bias: gly residues; the sequence is GMTGAGTGTGV. The span at 147–164 shows a compositional bias: basic and acidic residues; the sequence is GEKKGFMDKIKEKLPGQH.

The protein belongs to the plant dehydrin family.

In Oryza sativa subsp. japonica (Rice), this protein is Dehydrin Rab16C (RAB16C).